We begin with the raw amino-acid sequence, 382 residues long: Chaperone protein DnaJ (382 aa).

One can recognise a J domain in the interval 5 to 70 (DYYEVLGLQK…QKRAAYDQYG (66 aa)). The segment at 134–212 (GTTKDIQINT…CHGEGRVHKK (79 aa)) adopts a CR-type zinc-finger fold. Cys-147, Cys-150, Cys-164, Cys-167, Cys-186, Cys-189, Cys-200, and Cys-203 together coordinate Zn(2+). CXXCXGXG motif repeat units lie at residues 147–154 (CDSCGGSG), 164–171 (CPHCHGSG), 186–193 (CPTCHGSG), and 200–207 (CRNCHGEG).

This sequence belongs to the DnaJ family. In terms of assembly, homodimer. Zn(2+) is required as a cofactor.

It is found in the cytoplasm. Functionally, participates actively in the response to hyperosmotic and heat shock by preventing the aggregation of stress-denatured proteins and by disaggregating proteins, also in an autonomous, DnaK-independent fashion. Unfolded proteins bind initially to DnaJ; upon interaction with the DnaJ-bound protein, DnaK hydrolyzes its bound ATP, resulting in the formation of a stable complex. GrpE releases ADP from DnaK; ATP binding to DnaK triggers the release of the substrate protein, thus completing the reaction cycle. Several rounds of ATP-dependent interactions between DnaJ, DnaK and GrpE are required for fully efficient folding. Also involved, together with DnaK and GrpE, in the DNA replication of plasmids through activation of initiation proteins. This chain is Chaperone protein DnaJ, found in Haemophilus influenzae (strain ATCC 51907 / DSM 11121 / KW20 / Rd).